We begin with the raw amino-acid sequence, 463 residues long: L-seryl-tRNA(Sec) selenium transferase (463 aa).

Lys295 is modified (N6-(pyridoxal phosphate)lysine).

Belongs to the SelA family. Homodecamer; pentamer of dimers. Binds only one seryl-tRNA(Sec) per dimer. Pyridoxal 5'-phosphate serves as cofactor.

The protein resides in the cytoplasm. The catalysed reaction is L-seryl-tRNA(Sec) + selenophosphate + H(+) = L-selenocysteinyl-tRNA(Sec) + phosphate. It functions in the pathway aminoacyl-tRNA biosynthesis; selenocysteinyl-tRNA(Sec) biosynthesis; selenocysteinyl-tRNA(Sec) from L-seryl-tRNA(Sec) (bacterial route): step 1/1. Functionally, converts seryl-tRNA(Sec) to selenocysteinyl-tRNA(Sec) required for selenoprotein biosynthesis. The sequence is that of L-seryl-tRNA(Sec) selenium transferase from Shigella flexneri serotype 5b (strain 8401).